We begin with the raw amino-acid sequence, 597 residues long: CTP synthase (597 aa).

The tract at residues 1–272 is amidoligase domain; that stretch reads MARPKNVKYV…DMRVLKKLGL (272 aa). S18 contributes to the CTP binding site. S18 contributes to the UTP binding site. 19 to 24 serves as a coordination point for ATP; that stretch reads SLGKGI. Y59 contacts L-glutamine. D76 lines the ATP pocket. Residues D76 and E146 each contribute to the Mg(2+) site. CTP is bound by residues 153-155, 193-198, and K229; these read DIE and KTKPTQ. UTP contacts are provided by residues 193-198 and K229; that span reads KTKPTQ. Residues 299–543 form the Glutamine amidotransferase type-1 domain; it reads NVAICGKYTE…VGAAKAYADG (245 aa). G363 provides a ligand contact to L-glutamine. The Nucleophile; for glutamine hydrolysis role is filled by C390. L-glutamine contacts are provided by residues 391-394, E414, and R471; that span reads LGMQ. Residues H516 and E518 contribute to the active site.

The protein belongs to the CTP synthase family. As to quaternary structure, homotetramer.

It carries out the reaction UTP + L-glutamine + ATP + H2O = CTP + L-glutamate + ADP + phosphate + 2 H(+). The catalysed reaction is L-glutamine + H2O = L-glutamate + NH4(+). It catalyses the reaction UTP + NH4(+) + ATP = CTP + ADP + phosphate + 2 H(+). Its pathway is pyrimidine metabolism; CTP biosynthesis via de novo pathway; CTP from UDP: step 2/2. Allosterically activated by GTP, when glutamine is the substrate; GTP has no effect on the reaction when ammonia is the substrate. The allosteric effector GTP functions by stabilizing the protein conformation that binds the tetrahedral intermediate(s) formed during glutamine hydrolysis. Inhibited by the product CTP, via allosteric rather than competitive inhibition. In terms of biological role, catalyzes the ATP-dependent amination of UTP to CTP with either L-glutamine or ammonia as the source of nitrogen. Regulates intracellular CTP levels through interactions with the four ribonucleotide triphosphates. This Chlorobium luteolum (strain DSM 273 / BCRC 81028 / 2530) (Pelodictyon luteolum) protein is CTP synthase.